Here is a 404-residue protein sequence, read N- to C-terminus: Type II restriction enzyme EcoRII (404 aa).

Residue Tyr308 is part of the active site.

Homodimer. The cofactor is Mg(2+).

It carries out the reaction Endonucleolytic cleavage of DNA to give specific double-stranded fragments with terminal 5'-phosphates.. An E and P subtype restriction enzyme that recognizes the double-stranded sequence 5'-CCWGG-3' and cleaves before C-1. The sequence is that of Type II restriction enzyme EcoRII (ecoRIIR) from Escherichia coli.